A 109-amino-acid polypeptide reads, in one-letter code: MAYQLYRNTTLGNSLQESLDELIQSQQITPQLALQVLLQFDKAINSALAQRVRNRVNFRGSLNTYRFCDNVWTFVLNDVEFREVTELIKVDKVKIVACDGKNTGSNTTE.

The protein belongs to the TFIIA subunit 2 family. In terms of assembly, TFIIA is a heterodimer of the large unprocessed subunit 1 and a small subunit gamma. It was originally believed to be a heterotrimer of an alpha (p35), a beta (p19) and a gamma subunit (p12). Interacts with NCOA6 general coactivator. TFIIA forms a complex with TBP. Interacts with HSF1 (via transactivation domain). Part of TBP-based Pol II pre-initiation complex (PIC), in which Pol II core assembles with general transcription factors and other specific initiation factors including GTF2E1, GTF2E2, GTF2F1, GTF2F2, TCEA1, ERCC2, ERCC3, GTF2H2, GTF2H3, GTF2H4, GTF2H5, GTF2A1, GTF2A2, GTF2B and TBP; this large multi-subunit PIC complex mediates DNA unwinding and targets Pol II core to the transcription start site where the first phosphodiester bond forms.

It localises to the nucleus. Functionally, TFIIA is a component of the transcription machinery of RNA polymerase II and plays an important role in transcriptional activation. TFIIA in a complex with TBP mediates transcriptional activity. The sequence is that of Transcription initiation factor IIA subunit 2 (Gtf2a2) from Rattus norvegicus (Rat).